Reading from the N-terminus, the 255-residue chain is Diphthine synthase (255 aa).

S-adenosyl-L-methionine-binding positions include leucine 9, aspartate 85, valine 88, 113 to 114 (SI), leucine 164, alanine 207, and histidine 232.

It belongs to the diphthine synthase family. Homodimer.

The catalysed reaction is 2-[(3S)-amino-3-carboxypropyl]-L-histidyl-[translation elongation factor 2] + 3 S-adenosyl-L-methionine = diphthine-[translation elongation factor 2] + 3 S-adenosyl-L-homocysteine + 3 H(+). The protein operates within protein modification; peptidyl-diphthamide biosynthesis. Its function is as follows. S-adenosyl-L-methionine-dependent methyltransferase that catalyzes the trimethylation of the amino group of the modified target histidine residue in translation elongation factor 2 (EF-2), to form an intermediate called diphthine. The three successive methylation reactions represent the second step of diphthamide biosynthesis. The protein is Diphthine synthase of Methanococcus maripaludis (strain C6 / ATCC BAA-1332).